A 202-amino-acid polypeptide reads, in one-letter code: 3-isopropylmalate dehydratase small subunit 2 (202 aa).

It belongs to the LeuD family. LeuD type 1 subfamily. In terms of assembly, heterodimer of LeuC and LeuD.

It catalyses the reaction (2R,3S)-3-isopropylmalate = (2S)-2-isopropylmalate. It participates in amino-acid biosynthesis; L-leucine biosynthesis; L-leucine from 3-methyl-2-oxobutanoate: step 2/4. In terms of biological role, catalyzes the isomerization between 2-isopropylmalate and 3-isopropylmalate, via the formation of 2-isopropylmaleate. In Bordetella parapertussis (strain 12822 / ATCC BAA-587 / NCTC 13253), this protein is 3-isopropylmalate dehydratase small subunit 2.